The primary structure comprises 697 residues: Polyribonucleotide nucleotidyltransferase (697 aa).

Positions 490 and 496 each coordinate Mg(2+). The region spanning 557–616 (PKVVTMTIKPEKIRDVIGPGGKKINEIIDETGVKLDIEQDGTIFIGAVDKDAIARARSII) is the KH domain. Residues 626-694 (GQVYEGKVKR…KQGRVNASHK (69 aa)) form the S1 motif domain.

This sequence belongs to the polyribonucleotide nucleotidyltransferase family. The cofactor is Mg(2+).

The protein resides in the cytoplasm. It catalyses the reaction RNA(n+1) + phosphate = RNA(n) + a ribonucleoside 5'-diphosphate. Functionally, involved in mRNA degradation. Catalyzes the phosphorolysis of single-stranded polyribonucleotides processively in the 3'- to 5'-direction. This is Polyribonucleotide nucleotidyltransferase from Staphylococcus saprophyticus subsp. saprophyticus (strain ATCC 15305 / DSM 20229 / NCIMB 8711 / NCTC 7292 / S-41).